The primary structure comprises 379 residues: Botryococcene C-methyltransferase (379 aa).

Residues 17–37 (LLTWKGAAGLAAAVALGYIII) form a helical membrane-spanning segment.

This sequence belongs to the class I-like SAM-binding methyltransferase superfamily. Erg6/SMT family.

The protein resides in the microsome membrane. The catalysed reaction is C30 botryococcene + 2 S-adenosyl-L-methionine = 3,20-dimethyl-1,2,21,22-tetradehydro-2,3,20,21-tetrahydrobotryococcene + 2 S-adenosyl-L-homocysteine + 2 H(+). Its function is as follows. Converts botryococcene to mono- and dimethyl derivatives, but not to tri- and tetramethylated products. Unable to methylate cycloartenol, zymosterol or lanosterol, but can also use squalene as substrate. Methylates both C-3 and C22 positions, but only C-3 position in monomethylated squalenes. In contrast, monomethylated botryococcene occured mainly at the C-20 position yielding showacene, but also at the C-3 position yielding isoshowacene. This is Botryococcene C-methyltransferase (TMT-3) from Botryococcus braunii (Green alga).